The chain runs to 412 residues: Cytochrome p450 CYP199A2 (412 aa).

Residues 94–97 (RPPS) and S247 contribute to the substrate site. C361 is a binding site for heme.

It belongs to the cytochrome P450 family. Interacts with the ferredoxin-like iron-sulfur protein ThcC. It depends on heme as a cofactor.

It localises to the cytoplasm. It catalyses the reaction 4-methoxybenzoate + AH2 + O2 = 4-hydroxybenzoate + formaldehyde + A + H2O. Its function is as follows. The oxidative demethylation of 4-methoxybenzoate requires the participation of the monooxygenase CYP199A2, the ferredoxin-like protein ThcC/RPA1872 and a ferredoxin reductase to mediate the transfer of electrons from NADH to CYP199A2. It is also active with 4-ethylbenzoate. This is Cytochrome p450 CYP199A2 from Rhodopseudomonas palustris (strain ATCC BAA-98 / CGA009).